Here is a 372-residue protein sequence, read N- to C-terminus: Methylthioribose-1-phosphate isomerase (372 aa).

Asp-252 (proton donor) is an active-site residue.

The protein belongs to the eIF-2B alpha/beta/delta subunits family. MtnA subfamily.

It is found in the cytoplasm. The protein localises to the nucleus. The catalysed reaction is 5-(methylsulfanyl)-alpha-D-ribose 1-phosphate = 5-(methylsulfanyl)-D-ribulose 1-phosphate. It functions in the pathway amino-acid biosynthesis; L-methionine biosynthesis via salvage pathway; L-methionine from S-methyl-5-thio-alpha-D-ribose 1-phosphate: step 1/6. Functionally, catalyzes the interconversion of methylthioribose-1-phosphate (MTR-1-P) into methylthioribulose-1-phosphate (MTRu-1-P). This Yarrowia lipolytica (strain CLIB 122 / E 150) (Yeast) protein is Methylthioribose-1-phosphate isomerase.